The following is a 177-amino-acid chain: Early nodulin-like protein 15 (177 aa).

An N-terminal signal peptide occupies residues 1–24 (MASSSLLVTIFLCISVFFFSSVNA). The Phytocyanin domain maps to 25 to 129 (NEVTVGGKSG…GQKLRLVVIT (105 aa)). Cys83 and Cys117 form a disulfide bridge. The N-linked (GlcNAc...) asparagine glycan is linked to Asn84. The GPI-anchor amidated serine moiety is linked to residue Ser153. Residues 154-177 (GAAKLAGGFSVVFGLVLGLWAFFF) constitute a propeptide, removed in mature form.

This sequence belongs to the early nodulin-like (ENODL) family. As to expression, mostly expressed in seedlings, siliques and flowers, and, to a lower extent, in roots, stems and seeds, but barely in leaves.

It is found in the cell membrane. In terms of biological role, may act as a carbohydrate transporter. Required, together with ENODL11, ENODL12, ENODL13, ENODL14 and ENODL15, for male-female communication and pollen tube reception and burst at the synergid cell surface of the female gametophyte. In Arabidopsis thaliana (Mouse-ear cress), this protein is Early nodulin-like protein 15.